A 157-amino-acid polypeptide reads, in one-letter code: SsrA-binding protein (157 aa).

The interval 131–157 (KQLHDKRESVKQRDWQRDKARLMRDKG) is disordered. A compositionally biased stretch (basic and acidic residues) spans 132-157 (QLHDKRESVKQRDWQRDKARLMRDKG).

It belongs to the SmpB family.

It localises to the cytoplasm. Required for rescue of stalled ribosomes mediated by trans-translation. Binds to transfer-messenger RNA (tmRNA), required for stable association of tmRNA with ribosomes. tmRNA and SmpB together mimic tRNA shape, replacing the anticodon stem-loop with SmpB. tmRNA is encoded by the ssrA gene; the 2 termini fold to resemble tRNA(Ala) and it encodes a 'tag peptide', a short internal open reading frame. During trans-translation Ala-aminoacylated tmRNA acts like a tRNA, entering the A-site of stalled ribosomes, displacing the stalled mRNA. The ribosome then switches to translate the ORF on the tmRNA; the nascent peptide is terminated with the 'tag peptide' encoded by the tmRNA and targeted for degradation. The ribosome is freed to recommence translation, which seems to be the essential function of trans-translation. This is SsrA-binding protein from Methylorubrum populi (strain ATCC BAA-705 / NCIMB 13946 / BJ001) (Methylobacterium populi).